Consider the following 90-residue polypeptide: Putative toxin RelE1 (90 aa).

This sequence belongs to the RelE toxin family.

In terms of biological role, toxic component of a type II toxin-antitoxin (TA) system. Its cognate antitoxin is RelB1 (Potential). This is Putative toxin RelE1 (relE1) from Methanocaldococcus jannaschii (strain ATCC 43067 / DSM 2661 / JAL-1 / JCM 10045 / NBRC 100440) (Methanococcus jannaschii).